A 123-amino-acid chain; its full sequence is Probable cyclase otaY (123 aa).

The protein belongs to the aurE cyclase family.

It functions in the pathway mycotoxin biosynthesis. Probable cyclase; part of the gene cluster that mediates the biosynthesis of ochratoxin A (OTA), a mycotoxin composed of a chlorinated type I polyketide dihydroisocoumarin moiety linked to L-phenylalanine, and demonstrated to have nephrotoxic, immunotoxic, genotoxic, neurotoxic, and teratogenic properties. OtaY is probably involved in the polyketide cyclization. The pathway begins with the highly reducing polyketide synthase otaA that catalyzes the formation of the isocoumarin group during the initial stages of biosynthesis, starting from one acetate and 4 malonate units, to originate the characteristic pentaketide skeleton 7-methylmellein (7-MM) of the OTA molecule. The newly identified cyclase otaY might be involved in the polyketide cyclization reaction during the initial steps of the OTA biosynthesis. 7-MM is then oxidized into 7-carboxymellein (also called ochratoxin beta) by the cytochrome P450 monooxygenase otaC. The NRPS encoded by the otaB gene is involved in the linking of phenylalanine to the dihydroisocoumarin ring. The reaction catalyzed by NRPS results in the production of ochratoxin B (OTB), which is the non-chlorinated analog of OTA and which subsequently serves as the substrate of the halogenase otaD for chlorination activity to form the final molecular structure of OTA, containing a chlorine atom in the C-5 position of the molecule. The polypeptide is Probable cyclase otaY (Aspergillus carbonarius (strain ITEM 5010)).